A 144-amino-acid polypeptide reads, in one-letter code: Gonadotropin subunit beta-2 (144 aa).

Positions 1 to 27 are cleaved as a signal peptide; that stretch reads MGTPVKILVVRNHILFSVVVLLAVAQS. Cystine bridges form between C33-C81, C47-C96, C50-C134, C58-C112, C62-C114, and C117-C124. Residue N37 is glycosylated (N-linked (GlcNAc...) asparagine). Residues 143-144 constitute a propeptide that is removed on maturation; it reads VY.

It belongs to the glycoprotein hormones subunit beta family. As to quaternary structure, heterodimer of an alpha and a beta chain.

The protein resides in the secreted. Involved in gametogenesis and steroidogenesis. This Cyprinus carpio (Common carp) protein is Gonadotropin subunit beta-2 (cgbb).